Here is a 349-residue protein sequence, read N- to C-terminus: Phenylalanine--tRNA ligase alpha subunit (349 aa).

Residue Glu-258 participates in Mg(2+) binding.

This sequence belongs to the class-II aminoacyl-tRNA synthetase family. Phe-tRNA synthetase alpha subunit type 1 subfamily. Tetramer of two alpha and two beta subunits. Mg(2+) is required as a cofactor.

Its subcellular location is the cytoplasm. It catalyses the reaction tRNA(Phe) + L-phenylalanine + ATP = L-phenylalanyl-tRNA(Phe) + AMP + diphosphate + H(+). The sequence is that of Phenylalanine--tRNA ligase alpha subunit from Rickettsia africae (strain ESF-5).